Consider the following 882-residue polypeptide: Alanine--tRNA ligase (882 aa).

Residues His563, His567, Cys665, and His669 each contribute to the Zn(2+) site.

Belongs to the class-II aminoacyl-tRNA synthetase family. It depends on Zn(2+) as a cofactor.

It is found in the cytoplasm. The catalysed reaction is tRNA(Ala) + L-alanine + ATP = L-alanyl-tRNA(Ala) + AMP + diphosphate. Its function is as follows. Catalyzes the attachment of alanine to tRNA(Ala) in a two-step reaction: alanine is first activated by ATP to form Ala-AMP and then transferred to the acceptor end of tRNA(Ala). Also edits incorrectly charged Ser-tRNA(Ala) and Gly-tRNA(Ala) via its editing domain. The chain is Alanine--tRNA ligase from Synechococcus sp. (strain RCC307).